A 553-amino-acid polypeptide reads, in one-letter code: Cytochrome P450 86A22 (553 aa).

Residues 8-24 (MIVAIVAAYLLWFKSIT) form a helical membrane-spanning segment. Heme is bound at residue C459.

This sequence belongs to the cytochrome P450 family. Requires heme as cofactor. Mostly expressed in the developing stigma of floral buds. Weakly detected in leaves, stems and flowers.

It localises to the membrane. The catalysed reaction is (9Z)-octadecenoyl-CoA + reduced [NADPH--hemoprotein reductase] + O2 = (9Z)-18-hydroxyoctadecenoyl-CoA + oxidized [NADPH--hemoprotein reductase] + H2O + H(+). It catalyses the reaction (9Z,12Z)-octadecadienoyl-CoA + reduced [NADPH--hemoprotein reductase] + O2 = (9Z,12Z)-18-hydroxyoctadecadienoyl-CoA + oxidized [NADPH--hemoprotein reductase] + H2O + H(+). Functionally, fatty acyl-CoA omega-hydroxylase essential for the production of omega-hydroxy fatty acids and the biosynthesis of triacylglycerol-/diacylglycerol-based estolide polyesters in the stigma. Substrate preference is 16:0-CoA &gt; 18:1-CoA &gt; 18:0-CoA. The chain is Cytochrome P450 86A22 from Petunia hybrida (Petunia).